The chain runs to 706 residues: Elongation factor G 1 (706 aa).

Residues N8–T290 enclose the tr-type G domain. Residues A17 to T24, D88 to H92, and N142 to D145 each bind GTP.

Belongs to the TRAFAC class translation factor GTPase superfamily. Classic translation factor GTPase family. EF-G/EF-2 subfamily.

It localises to the cytoplasm. Functionally, catalyzes the GTP-dependent ribosomal translocation step during translation elongation. During this step, the ribosome changes from the pre-translocational (PRE) to the post-translocational (POST) state as the newly formed A-site-bound peptidyl-tRNA and P-site-bound deacylated tRNA move to the P and E sites, respectively. Catalyzes the coordinated movement of the two tRNA molecules, the mRNA and conformational changes in the ribosome. In Pseudomonas aeruginosa (strain ATCC 15692 / DSM 22644 / CIP 104116 / JCM 14847 / LMG 12228 / 1C / PRS 101 / PAO1), this protein is Elongation factor G 1.